A 56-amino-acid polypeptide reads, in one-letter code: Ovomucoid (56 aa).

Residues valine 6–cysteine 56 enclose the Kazal-like domain. Disulfide bonds link cysteine 8–cysteine 38, cysteine 16–cysteine 35, and cysteine 24–cysteine 56. An N-linked (GlcNAc...) asparagine glycan is attached at asparagine 45.

Its subcellular location is the secreted. The protein is Ovomucoid of Callipepla squamata castanogastris (Chestnut bellied scaled quail).